Consider the following 243-residue polypeptide: Orotidine 5'-phosphate decarboxylase (243 aa).

Residues Asp18, Lys39, 66-75 (DLKFHDIPAT), Thr130, Arg192, Gln201, Gly221, and Arg222 contribute to the substrate site. Lys68 acts as the Proton donor in catalysis.

It belongs to the OMP decarboxylase family. Type 1 subfamily. In terms of assembly, homodimer.

It catalyses the reaction orotidine 5'-phosphate + H(+) = UMP + CO2. The protein operates within pyrimidine metabolism; UMP biosynthesis via de novo pathway; UMP from orotate: step 2/2. Catalyzes the decarboxylation of orotidine 5'-monophosphate (OMP) to uridine 5'-monophosphate (UMP). The sequence is that of Orotidine 5'-phosphate decarboxylase from Synechococcus sp. (strain WH7803).